The chain runs to 264 residues: MRRIFVQNRELVVPGTLLAQGPYKNGRGTFKEGSRIYSTVIGLVDIKGNTIRVIPLEGPYIPEVGDNVLGKIVDVKFSSWTVDIGSPYSATLKIQDYTDEKIDLLRTDLRKFFDIGDIIYAKVKGINEVNNIELTTKGMPFNGGPLRGGQIIKITSSKVPRVIGKGGSMINMIKKLTQSRIIVGQNGWIWISSKNPELEKLAIEAILKIERESHTRGLTDRIKNMLLSKLQELKERGVIEEIPSLEEETQEETVMENDVEARGP.

Residues 65 to 137 enclose the S1 motif domain; the sequence is GDNVLGKIVD…EVNNIELTTK (73 aa). The KH domain occupies 147–206; the sequence is RGGQIIKITSSKVPRVIGKGGSMINMIKKLTQSRIIVGQNGWIWISSKNPELEKLAIEAI. The segment covering 244–258 has biased composition (acidic residues); the sequence is SLEEETQEETVMEND. The interval 244 to 264 is disordered; the sequence is SLEEETQEETVMENDVEARGP.

It belongs to the RRP4 family. Component of the archaeal exosome complex. Forms a trimer of Rrp4 and/or Csl4 subunits. The trimer associates with a hexameric ring-like arrangement composed of 3 Rrp41-Rrp42 heterodimers.

It is found in the cytoplasm. Its function is as follows. Non-catalytic component of the exosome, which is a complex involved in RNA degradation. Increases the RNA binding and the efficiency of RNA degradation. Confers strong poly(A) specificity to the exosome. The polypeptide is Exosome complex component Rrp4 (Pyrococcus furiosus (strain ATCC 43587 / DSM 3638 / JCM 8422 / Vc1)).